The chain runs to 126 residues: Small ribosomal subunit protein uS13 (126 aa).

A disordered region spans residues 92–126 (RMGLPVRGQRTRTNARTRRGGRRTVAGKKKAPAKK). Basic residues predominate over residues 100–126 (QRTRTNARTRRGGRRTVAGKKKAPAKK).

It belongs to the universal ribosomal protein uS13 family. In terms of assembly, part of the 30S ribosomal subunit. Forms a loose heterodimer with protein S19. Forms two bridges to the 50S subunit in the 70S ribosome.

In terms of biological role, located at the top of the head of the 30S subunit, it contacts several helices of the 16S rRNA. In the 70S ribosome it contacts the 23S rRNA (bridge B1a) and protein L5 of the 50S subunit (bridge B1b), connecting the 2 subunits; these bridges are implicated in subunit movement. Contacts the tRNAs in the A and P-sites. The chain is Small ribosomal subunit protein uS13 from Cyanothece sp. (strain PCC 7425 / ATCC 29141).